Consider the following 388-residue polypeptide: Bifunctional enzyme IspD/IspF (388 aa).

The 2-C-methyl-D-erythritol 4-phosphate cytidylyltransferase stretch occupies residues 1-228 (MRIAALLLAA…GVIDRNLLPR (228 aa)). The interval 228-388 (RVGLGYDVHA…SIMVPDNGEA (161 aa)) is 2-C-methyl-D-erythritol 2,4-cyclodiphosphate synthase. Residues Asp-234 and His-236 each coordinate a divalent metal cation. 4-CDP-2-C-methyl-D-erythritol 2-phosphate contacts are provided by residues 234–236 (DVH) and 260–261 (HS). Position 268 (His-268) interacts with a divalent metal cation. Residues 282 to 284 (DIG), 358 to 361 (TTSE), Phe-365, and Arg-368 each bind 4-CDP-2-C-methyl-D-erythritol 2-phosphate.

This sequence in the N-terminal section; belongs to the IspD/TarI cytidylyltransferase family. IspD subfamily. In the C-terminal section; belongs to the IspF family. A divalent metal cation serves as cofactor.

It catalyses the reaction 2-C-methyl-D-erythritol 4-phosphate + CTP + H(+) = 4-CDP-2-C-methyl-D-erythritol + diphosphate. It carries out the reaction 4-CDP-2-C-methyl-D-erythritol 2-phosphate = 2-C-methyl-D-erythritol 2,4-cyclic diphosphate + CMP. It functions in the pathway isoprenoid biosynthesis; isopentenyl diphosphate biosynthesis via DXP pathway; isopentenyl diphosphate from 1-deoxy-D-xylulose 5-phosphate: step 2/6. Its pathway is isoprenoid biosynthesis; isopentenyl diphosphate biosynthesis via DXP pathway; isopentenyl diphosphate from 1-deoxy-D-xylulose 5-phosphate: step 4/6. Its function is as follows. Bifunctional enzyme that catalyzes the formation of 4-diphosphocytidyl-2-C-methyl-D-erythritol from CTP and 2-C-methyl-D-erythritol 4-phosphate (MEP) (IspD), and catalyzes the conversion of 4-diphosphocytidyl-2-C-methyl-D-erythritol 2-phosphate (CDP-ME2P) to 2-C-methyl-D-erythritol 2,4-cyclodiphosphate (ME-CPP) with a corresponding release of cytidine 5-monophosphate (CMP) (IspF). This Gluconobacter oxydans (strain 621H) (Gluconobacter suboxydans) protein is Bifunctional enzyme IspD/IspF.